The primary structure comprises 323 residues: Phospho-N-acetylmuramoyl-pentapeptide-transferase (323 aa).

9 helical membrane passes run 12-32, 58-78, 84-104, 120-140, 151-171, 177-197, 200-220, 229-250, and 303-323; these read IVMA…IIIP, PTIG…IMVG, AMIA…DDLL, MILL…YIGT, INFG…VTNA, GLDG…GIIS, LGHI…LAFL, VFMG…ALIL, and KIVS…FASL.

Belongs to the glycosyltransferase 4 family. MraY subfamily. Mg(2+) serves as cofactor.

The protein localises to the cell membrane. The catalysed reaction is UDP-N-acetyl-alpha-D-muramoyl-L-alanyl-gamma-D-glutamyl-meso-2,6-diaminopimeloyl-D-alanyl-D-alanine + di-trans,octa-cis-undecaprenyl phosphate = di-trans,octa-cis-undecaprenyl diphospho-N-acetyl-alpha-D-muramoyl-L-alanyl-D-glutamyl-meso-2,6-diaminopimeloyl-D-alanyl-D-alanine + UMP. It functions in the pathway cell wall biogenesis; peptidoglycan biosynthesis. Catalyzes the initial step of the lipid cycle reactions in the biosynthesis of the cell wall peptidoglycan: transfers peptidoglycan precursor phospho-MurNAc-pentapeptide from UDP-MurNAc-pentapeptide onto the lipid carrier undecaprenyl phosphate, yielding undecaprenyl-pyrophosphoryl-MurNAc-pentapeptide, known as lipid I. This is Phospho-N-acetylmuramoyl-pentapeptide-transferase from Clostridium perfringens (strain ATCC 13124 / DSM 756 / JCM 1290 / NCIMB 6125 / NCTC 8237 / Type A).